A 113-amino-acid polypeptide reads, in one-letter code: Putative pterin-4-alpha-carbinolamine dehydratase (113 aa).

This sequence belongs to the pterin-4-alpha-carbinolamine dehydratase family.

It catalyses the reaction (4aS,6R)-4a-hydroxy-L-erythro-5,6,7,8-tetrahydrobiopterin = (6R)-L-erythro-6,7-dihydrobiopterin + H2O. In Saccharophagus degradans (strain 2-40 / ATCC 43961 / DSM 17024), this protein is Putative pterin-4-alpha-carbinolamine dehydratase.